A 72-amino-acid chain; its full sequence is Teretoxin Tan11.1 (72 aa).

The first 21 residues, 1–21 (MLATKMSVTFCFLLMLTTVML), serve as a signal peptide directing secretion. The propeptide occupies 22 to 31 (PTEAKTVAGR).

This sequence belongs to the teretoxin H (TH) superfamily. In terms of processing, contains 4 disulfide bonds. Expressed by the venom duct.

The protein resides in the secreted. The polypeptide is Teretoxin Tan11.1 (Terebra anilis (Auger snail)).